Consider the following 308-residue polypeptide: Porphobilinogen deaminase (308 aa).

An S-(dipyrrolylmethanemethyl)cysteine modification is found at cysteine 241.

The protein belongs to the HMBS family. As to quaternary structure, monomer. The cofactor is dipyrromethane.

The catalysed reaction is 4 porphobilinogen + H2O = hydroxymethylbilane + 4 NH4(+). It participates in porphyrin-containing compound metabolism; protoporphyrin-IX biosynthesis; coproporphyrinogen-III from 5-aminolevulinate: step 2/4. Tetrapolymerization of the monopyrrole PBG into the hydroxymethylbilane pre-uroporphyrinogen in several discrete steps. The chain is Porphobilinogen deaminase from Staphylococcus aureus (strain MSSA476).